The following is a 638-amino-acid chain: Protein disulfide-isomerase A4 (638 aa).

A signal peptide spans 1-20 (MKLRKAWLLVLLLALTQLLA). 2 consecutive Thioredoxin domains span residues 21 to 162 (AASA…EVSQ) and 162 to 294 (QPDW…EFLK). Residues 24–50 (AGDAHEDTSDTENATEEEEEEDDDDLE) are disordered. A compositionally biased stretch (acidic residues) spans 32–50 (SDTENATEEEEEEDDDDLE). N-linked (GlcNAc...) asparagine glycosylation occurs at N36. Positions 84–87 (CGHC) match the CXXC motif. 2 disulfides stabilise this stretch: C84-C87 and C199-C202. An N6-acetyllysine modification is found at K359. Positions 498–629 (FKKGKLKPVI…LSKFIDEHAT (132 aa)) constitute a Thioredoxin 3 domain. A CXXC motif is present at residues 548–551 (CGHC). An intrachain disulfide couples C548 to C551. A Prevents secretion from ER motif is present at residues 635–638 (KEEL).

This sequence belongs to the protein disulfide isomerase family. Part of a large chaperone multiprotein complex comprising DNAJB11, HSP90B1, HSPA5, HYOU, PDIA2, PDIA4, PDIA6, PPIB, SDF2L1, UGGT1 and very small amounts of ERP29, but not, or at very low levels, CALR nor CANX. Component of a complex containing at least CRELD2, MANF, MATN3 and PDIA4.

It localises to the endoplasmic reticulum lumen. The protein localises to the melanosome. The catalysed reaction is Catalyzes the rearrangement of -S-S- bonds in proteins.. This is Protein disulfide-isomerase A4 (Pdia4) from Mus musculus (Mouse).